The chain runs to 798 residues: Serine/threonine-protein kinase SIK2 (798 aa).

Residues 26-277 (YDIERTLGKG…ISQIKQHKWM (252 aa)) form the Protein kinase domain. ATP is bound by residues 32-40 (LGKGNFAVV) and lysine 55. The active-site Proton acceptor is aspartate 148. Threonine 181 carries the phosphothreonine modification. The residue at position 185 (serine 185) is a Phosphoserine. Residues 302-342 (DYNEQVLGIMQTLGIDRQRTVESLQNSSYNHFAAIYYLLLE) form the UBA domain. The span at 351 to 361 (QLSSRPATGRQ) shows a compositional bias: polar residues. A disordered region spans residues 351–382 (QLSSRPATGRQQRPRSSEISNAEMPQDSLTSE). Phosphoserine is present on serine 575. Residues 672 to 691 (ACPQTSQTSATNGLPPSDSA) are disordered. Positions 673-685 (CPQTSQTSATNGL) are enriched in polar residues.

This sequence belongs to the protein kinase superfamily. CAMK Ser/Thr protein kinase family. SNF1 subfamily. Requires Mg(2+) as cofactor. In terms of processing, phosphorylated at Thr-181 by STK11/LKB1 in complex with STE20-related adapter-alpha (STRADA) pseudo kinase and CAB39. In terms of tissue distribution, ubiquitously expressed in embryonic tissue.

It localises to the cytoplasm. The enzyme catalyses L-seryl-[protein] + ATP = O-phospho-L-seryl-[protein] + ADP + H(+). The catalysed reaction is L-threonyl-[protein] + ATP = O-phospho-L-threonyl-[protein] + ADP + H(+). With respect to regulation, activated by phosphorylation on Thr-181. In terms of biological role, phosphorylates IRS1 in insulin-stimulated adipocytes, potentially modulating the efficiency of insulin signal transduction. Inhibits CREB activity by phosphorylating and repressing the CREB-specific coactivators, CRTC1-3. This Gallus gallus (Chicken) protein is Serine/threonine-protein kinase SIK2 (SIK2).